The chain runs to 441 residues: Arginine biosynthesis bifunctional protein ArgJ, mitochondrial (441 aa).

Substrate contacts are provided by Thr-177, Lys-204, Thr-215, Glu-301, Asn-436, and Ser-441. Catalysis depends on Thr-215, which acts as the Nucleophile.

This sequence belongs to the ArgJ family. Heterodimer of an alpha and a beta chain. Post-translationally, the alpha and beta chains are autoproteolytically processed from a single precursor protein within the mitochondrion.

The protein resides in the mitochondrion matrix. The catalysed reaction is N(2)-acetyl-L-ornithine + L-glutamate = N-acetyl-L-glutamate + L-ornithine. The enzyme catalyses L-glutamate + acetyl-CoA = N-acetyl-L-glutamate + CoA + H(+). Its pathway is amino-acid biosynthesis; L-arginine biosynthesis; L-ornithine and N-acetyl-L-glutamate from L-glutamate and N(2)-acetyl-L-ornithine (cyclic): step 1/1. It functions in the pathway amino-acid biosynthesis; L-arginine biosynthesis; N(2)-acetyl-L-ornithine from L-glutamate: step 1/4. In terms of biological role, catalyzes two activities which are involved in the cyclic version of arginine biosynthesis: the synthesis of acetylglutamate from glutamate and acetyl-CoA, and of ornithine by transacetylation between acetylornithine and glutamate. The sequence is that of Arginine biosynthesis bifunctional protein ArgJ, mitochondrial from Kluyveromyces lactis (strain ATCC 8585 / CBS 2359 / DSM 70799 / NBRC 1267 / NRRL Y-1140 / WM37) (Yeast).